A 235-amino-acid chain; its full sequence is Acyl-protein thioesterase 1 (235 aa).

Catalysis depends on charge relay system residues S125, D181, and H213.

The protein belongs to the AB hydrolase superfamily. AB hydrolase 2 family.

The protein localises to the cytoplasm. It is found in the nucleus. It catalyses the reaction S-hexadecanoyl-L-cysteinyl-[protein] + H2O = L-cysteinyl-[protein] + hexadecanoate + H(+). Functionally, hydrolyzes fatty acids from S-acylated cysteine residues in proteins with a strong preference for palmitoylated G-alpha proteins over other acyl substrates. Mediates the deacylation of G-alpha proteins such as GPA1 in vivo, but has weak or no activity toward palmitoylated Ras proteins. Has weak lysophospholipase activity in vitro; however such activity may not exist in vivo. The protein is Acyl-protein thioesterase 1 of Gibberella zeae (strain ATCC MYA-4620 / CBS 123657 / FGSC 9075 / NRRL 31084 / PH-1) (Wheat head blight fungus).